We begin with the raw amino-acid sequence, 423 residues long: Progestin and adipoQ receptor-like protein 1 (423 aa).

The Cytoplasmic segment spans residues 1-201 (MDPDEVNQAL…KSIWSLHTET (201 aa)). Residues 54 to 140 (VVSPTNSDDE…DEDELEVDVK (87 aa)) are disordered. Residues 60-69 (SDDEEGEFCS) show a composition bias toward acidic residues. A compositionally biased stretch (basic residues) spans 104–114 (TVLRYRRKKGG). Residues 202-222 (GNIWTHLIGCVAFFLLACWFL) traverse the membrane as a helical segment. The Extracellular segment spans residues 223 to 234 (TRPDNHIQFQEK). Residues 235–252 (VVFSFFFAGAVSVSDSRS) form a helical membrane-spanning segment. Residues 253 to 288 (PSTPSRVIRSTSSRYSANSTIWESRCSLSARLFQPK) are Cytoplasmic-facing. The helical transmembrane segment at 289–309 (ITYIAMVCVLGIGAIVVSLWD) threads the bilayer. The Extracellular segment spans residues 310–320 (KFSESKYRPVR). The chain crosses the membrane as a helical span at residues 321-341 (AAVFVGMGCSGVIPTIHYIIT). Over 342–351 (DGVHSLFADN) the chain is Cytoplasmic. A helical transmembrane segment spans residues 352 to 372 (SFHWLLLMAFLYLLGAALYAT). Topologically, residues 373–392 (RTPERFFPGKCDIWFQSHQL) are extracellular. The chain crosses the membrane as a helical span at residues 393–413 (FHTCVVIAAFVHYYGISEMAF). Topologically, residues 414 to 423 (ARLNEQCPVR) are cytoplasmic.

The protein belongs to the ADIPOR family.

The protein localises to the membrane. Probable receptor, which may be involved in metabolic pathways that regulate lipid metabolism such as fatty acid oxidation. This chain is Progestin and adipoQ receptor-like protein 1, found in Caenorhabditis briggsae.